Reading from the N-terminus, the 281-residue chain is Tryptophan 2,3-dioxygenase (281 aa).

Substrate contacts are provided by residues 50-54, tyrosine 112, and arginine 116; that span reads FIIQH. Histidine 239 contacts heme. Threonine 253 is a binding site for substrate.

The protein belongs to the tryptophan 2,3-dioxygenase family. In terms of assembly, homotetramer. Requires heme as cofactor.

The catalysed reaction is L-tryptophan + O2 = N-formyl-L-kynurenine. The protein operates within amino-acid degradation; L-tryptophan degradation via kynurenine pathway; L-kynurenine from L-tryptophan: step 1/2. Its function is as follows. Heme-dependent dioxygenase that catalyzes the oxidative cleavage of the L-tryptophan (L-Trp) pyrrole ring and converts L-tryptophan to N-formyl-L-kynurenine. Catalyzes the oxidative cleavage of the indole moiety. The polypeptide is Tryptophan 2,3-dioxygenase (Saccharopolyspora erythraea (strain ATCC 11635 / DSM 40517 / JCM 4748 / NBRC 13426 / NCIMB 8594 / NRRL 2338)).